The following is a 25-amino-acid chain: Chaperonin GroEL (25 aa).

Belongs to the chaperonin (HSP60) family. As to quaternary structure, forms a cylinder of 14 subunits composed of two heptameric rings stacked back-to-back. Interacts with the co-chaperonin GroES.

The protein localises to the cytoplasm. The enzyme catalyses ATP + H2O + a folded polypeptide = ADP + phosphate + an unfolded polypeptide.. Functionally, together with its co-chaperonin GroES, plays an essential role in assisting protein folding. The GroEL-GroES system forms a nano-cage that allows encapsulation of the non-native substrate proteins and provides a physical environment optimized to promote and accelerate protein folding. In Delftia acidovorans (Pseudomonas acidovorans), this protein is Chaperonin GroEL.